Here is a 270-residue protein sequence, read N- to C-terminus: Aliphatic sulfonates import ATP-binding protein SsuB 3 (270 aa).

The ABC transporter domain occupies 17 to 238; the sequence is LAVQNLKKAF…ARGSHRLAAL (222 aa). Residue 49-56 coordinates ATP; the sequence is GRSGCGKS.

This sequence belongs to the ABC transporter superfamily. Aliphatic sulfonates importer (TC 3.A.1.17.2) family. In terms of assembly, the complex is composed of two ATP-binding proteins (SsuB), two transmembrane proteins (SsuC) and a solute-binding protein (SsuA).

It is found in the cell inner membrane. The catalysed reaction is ATP + H2O + aliphatic sulfonate-[sulfonate-binding protein]Side 1 = ADP + phosphate + aliphatic sulfonateSide 2 + [sulfonate-binding protein]Side 1.. Part of the ABC transporter complex SsuABC involved in aliphatic sulfonates import. Responsible for energy coupling to the transport system. The chain is Aliphatic sulfonates import ATP-binding protein SsuB 3 from Pseudomonas syringae pv. tomato (strain ATCC BAA-871 / DC3000).